We begin with the raw amino-acid sequence, 109 residues long: U3-lycotoxin-Ls1x (109 aa).

A signal peptide spans 1–20 (MKFVLLFGVLLVTLFSYSSA). Residues 21-44 (EMLDDFDQADEDELLSLIEKEEAR) constitute a propeptide that is removed on maturation. Cystine bridges form between Cys48-Cys63, Cys55-Cys72, Cys62-Cys88, and Cys74-Cys86.

It belongs to the neurotoxin 19 (CSTX) family. 01 subfamily. In terms of tissue distribution, expressed by the venom gland.

The protein localises to the secreted. This is U3-lycotoxin-Ls1x from Lycosa singoriensis (Wolf spider).